A 131-amino-acid chain; its full sequence is METANGEEPPAGPPVSLHGRRLLRVGGACPTPLPVLQRLPPSALHHTLHCVPRRVCVSPLGQVTRIPPVRTVRRAPSGLLPQRRGGPSWWPPSGVARGGPSWWPPSGVVRGGPSSWPPSGVAEPREALGLP.

The tract at residues 101–131 (SWWPPSGVVRGGPSSWPPSGVAEPREALGLP) is disordered.

This is an uncharacterized protein from Homo sapiens (Human).